The following is a 116-amino-acid chain: Large ribosomal subunit protein bL19 (116 aa).

The protein belongs to the bacterial ribosomal protein bL19 family.

Functionally, this protein is located at the 30S-50S ribosomal subunit interface and may play a role in the structure and function of the aminoacyl-tRNA binding site. This is Large ribosomal subunit protein bL19 from Clostridium botulinum (strain Eklund 17B / Type B).